Consider the following 135-residue polypeptide: ATP synthase epsilon chain (135 aa).

It belongs to the ATPase epsilon chain family. As to quaternary structure, F-type ATPases have 2 components, CF(1) - the catalytic core - and CF(0) - the membrane proton channel. CF(1) has five subunits: alpha(3), beta(3), gamma(1), delta(1), epsilon(1). CF(0) has three main subunits: a, b and c.

It localises to the cell inner membrane. Functionally, produces ATP from ADP in the presence of a proton gradient across the membrane. This is ATP synthase epsilon chain from Rhodopseudomonas palustris (strain BisB18).